Here is an 85-residue protein sequence, read N- to C-terminus: Depressant insect toxin BmK ITa1 (85 aa).

The first 21 residues, 1 to 21 (MKLFLLLLISASMLIDGLVNA), serve as a signal peptide directing secretion. The LCN-type CS-alpha/beta domain occupies 22–82 (DGYIRGSNGC…TWKSESNTCG (61 aa)). Intrachain disulfides connect Cys31–Cys81, Cys35–Cys56, Cys42–Cys63, and Cys46–Cys65. A Glycine amide modification is found at Gly82.

The protein belongs to the long (4 C-C) scorpion toxin superfamily. Sodium channel inhibitor family. Beta subfamily. In terms of tissue distribution, expressed by the venom gland.

It localises to the secreted. Functionally, depressant insect toxins cause a transient contraction paralysis followed by a slow flaccid paralysis. They bind voltage-independently to sodium channels (Nav) and block action potentials, primarily by depolarizing the axonal membrane and suppressing the sodium current. This chain is Depressant insect toxin BmK ITa1, found in Olivierus martensii (Manchurian scorpion).